The primary structure comprises 357 residues: Isopenicillin-N N-acyltransferase (357 aa).

6-aminopenicillanate is bound by residues D121 and R310.

The protein belongs to the peptidase C45 family. In terms of assembly, the active form of the enzyme results from processing of the 40-kDa monomeric precursor to a heterodimer containing subunits of 11 and 29 kDa. Post-translationally, the pre-AAT protein is synthesized as 40 kDa precursor which is then self-processed into an 11 kDa (protein A) and a 29 kDa (protein B). The B protein carries AAT activity.

Its subcellular location is the peroxisome matrix. It catalyses the reaction isopenicillin N + phenylacetyl-CoA + H2O = penicillin G + L-2-aminoadipate + CoA + H(+). It participates in antibiotic biosynthesis; penicillin G biosynthesis; penicillin G from L-alpha-aminoadipate and L-cysteine and L-valine: step 3/3. Isopenicillin-N N-acyltransferase; part of the gene cluster that mediates the biosynthesis of penicillin, the world's most important antibiotic. AatA catalyzes the exchange of the alpha-aminoadipyl side chain of isopenicillin N for phenylacetic acid to yield penicillin. This step occurs in the peroxisomal matrix and the penM and paaT transporters are involved in the isopenicillin N and phenylacetic acid import into the peroxisome, respectively. The penicillin biosynthesis occurs via 3 enzymatic steps, the first corresponding to the production of the tripeptide N-[(5S)-5-amino-5-carboxypentanoyl]-L-cysteinyl-D-valine (LLD-ACV or ACV) by the NRPS acvA. The tripeptide ACV is then cyclized to isopenicillin N (IPN) by the isopenicillin N synthase ipnA that forms the beta-lactam nucleus. Finally, the alpha-aminoadipyl side chain is exchanged for phenylacetic acid by the isopenicillin N acyltransferase aatA to yield penicillin in the peroxisomal matrix. The sequence is that of Isopenicillin-N N-acyltransferase from Penicillium chrysogenum (Penicillium notatum).